The primary structure comprises 225 residues: THAP domain-containing protein 1 B (225 aa).

Residues 5–57 (CSAYGCKNRYDKDRPISFHKFPLKRPLLCKKWEAAVRRADFKPTKYSSICSDH) form a THAP-type zinc finger. Residues 139–194 (VEDTVHQRRRIQQLEEQVDKLRKKLKIANQKCRRQERSLEKLEKEVSEYREAKGSG) adopt a coiled-coil conformation.

Belongs to the THAP1 family.

The protein localises to the nucleus. Its subcellular location is the nucleoplasm. Its function is as follows. DNA-binding transcription regulator that regulates endothelial cell proliferation and G1/S cell-cycle progression. Specifically binds the 5'-[AT]NTNN[GT]GGCA[AGT]-3' core DNA sequence and acts by modulating expression of pRB-E2F cell-cycle target genes. This Xenopus laevis (African clawed frog) protein is THAP domain-containing protein 1 B (thap1-b).